A 670-amino-acid polypeptide reads, in one-letter code: Sodium, potassium, lithium and rubidium/H(+) antiporter (670 aa).

11 helical membrane passes run 5–27 (LVVLVLLTIIAISNIVNRFIPFI), 46–66 (GLHFELNTELFFVLFIAPLLF), 83–103 (PILLLALGLVFATVIVGGYTI), 105–125 (WMIPAIPLAAAFGLAAILSPT), 156–176 (ASGLVAFKFAIAAAVTGAFSL), 182–202 (SFVFISLGGLLCGVVISFLII), 228–248 (FVIYLAAEEIGVSGILAVVAG), 276–296 (IILFILNGLVFVILGTQIPDV), 314–334 (YILVITFTLMLLRFLWVLFFW), 355–375 (LLISISGVRGAVTLAGSFSIP), and 389–409 (LILFLAAGVILCTLVIATVVL).

The protein belongs to the monovalent cation:proton antiporter 1 (CPA1) transporter (TC 2.A.36) family. Nhak (TC 2.A.36.3.2) subfamily.

The protein localises to the cell membrane. Functionally, transporter involved in the efflux of sodium, potassium, lithium and rubidium. The polypeptide is Sodium, potassium, lithium and rubidium/H(+) antiporter (nhaK) (Bacillus subtilis (strain 168)).